We begin with the raw amino-acid sequence, 262 residues long: Transcription factor of morphogenesis MCM1 (262 aa).

2 disordered regions span residues 1–62 (MAIK…ERRK) and 140–262 (EEGL…QQYQ). A compositionally biased stretch (low complexity) spans 17-35 (NSHSTNNNNNSNNSNSNNN). One can recognise an MADS-box domain in the interval 58 to 118 (KERRKIEIKF…GLVYTFTTPK (61 aa)). A compositionally biased stretch (polar residues) spans 150 to 170 (QSDGNTGDSPDQSPAPATNPN). Composition is skewed to low complexity over residues 182–198 (QQQQ…AQQQ), 224–239 (PQQQ…LQGG), and 249–262 (NIQN…QQYQ).

Interacts with AHR1.

It is found in the nucleus. Its function is as follows. Transcription factor that is recruited by AHR1 to the promoters of genes involved in biofilm formation, which include several key adhesion genes. Plays an important role in cell adhesion, hyphal growth and virulence. Implicated in the regulation of opaque-phase-specific gene expression. This Candida albicans (strain SC5314 / ATCC MYA-2876) (Yeast) protein is Transcription factor of morphogenesis MCM1 (MCM1).